The sequence spans 510 residues: Arginine biosynthesis bifunctional protein ArgJ, chloroplastic (510 aa).

Substrate contacts are provided by T223, K249, E359, N505, and T510.

Belongs to the ArgJ family. Heterodimer of an alpha and a beta chain.

The protein localises to the plastid. It localises to the chloroplast. The enzyme catalyses N(2)-acetyl-L-ornithine + L-glutamate = N-acetyl-L-glutamate + L-ornithine. It carries out the reaction L-glutamate + acetyl-CoA = N-acetyl-L-glutamate + CoA + H(+). Its pathway is amino-acid biosynthesis; L-arginine biosynthesis; L-ornithine and N-acetyl-L-glutamate from L-glutamate and N(2)-acetyl-L-ornithine (cyclic): step 1/1. It functions in the pathway amino-acid biosynthesis; L-arginine biosynthesis; N(2)-acetyl-L-ornithine from L-glutamate: step 1/4. Its function is as follows. Catalyzes two activities which are involved in the cyclic version of arginine biosynthesis: the synthesis of acetylglutamate from glutamate and acetyl-CoA, and of ornithine by transacetylation between acetylornithine and glutamate. This chain is Arginine biosynthesis bifunctional protein ArgJ, chloroplastic, found in Vitis vinifera (Grape).